We begin with the raw amino-acid sequence, 346 residues long: Nicotinate-nucleotide--dimethylbenzimidazole phosphoribosyltransferase (346 aa).

Glu312 (proton acceptor) is an active-site residue.

The protein belongs to the CobT family.

The enzyme catalyses 5,6-dimethylbenzimidazole + nicotinate beta-D-ribonucleotide = alpha-ribazole 5'-phosphate + nicotinate + H(+). It participates in nucleoside biosynthesis; alpha-ribazole biosynthesis; alpha-ribazole from 5,6-dimethylbenzimidazole: step 1/2. Functionally, catalyzes the synthesis of alpha-ribazole-5'-phosphate from nicotinate mononucleotide (NAMN) and 5,6-dimethylbenzimidazole (DMB). This is Nicotinate-nucleotide--dimethylbenzimidazole phosphoribosyltransferase from Cupriavidus taiwanensis (strain DSM 17343 / BCRC 17206 / CCUG 44338 / CIP 107171 / LMG 19424 / R1) (Ralstonia taiwanensis (strain LMG 19424)).